The sequence spans 108 residues: Heme oxygenase (staphylobilin-producing) 2 (108 aa).

The 92-residue stretch at 2-93 folds into the ABM domain; that stretch reads FMAENRLQLQ…DDDGQQSPIL (92 aa). Asn6 serves as a coordination point for Fe cation. Heme contacts are provided by residues 21–28 and His76; that span reads RFYNRQGI.

This sequence belongs to the antibiotic biosynthesis monooxygenase family. Heme-degrading monooxygenase IsdG subfamily. Homodimer.

The protein localises to the cytoplasm. The enzyme catalyses heme b + 5 AH2 + 4 O2 + 2 H(+) = delta-staphylobilin + Fe(2+) + formaldehyde + 5 A + 4 H2O. It catalyses the reaction heme b + 5 AH2 + 4 O2 + 2 H(+) = beta-staphylobilin + Fe(2+) + formaldehyde + 5 A + 4 H2O. In terms of biological role, allows bacterial pathogens to use the host heme as an iron source. Catalyzes the oxidative degradation of the heme macrocyclic porphyrin ring to the oxo-bilirubin chromophore staphylobilin (a mixture of the linear tetrapyrroles 5-oxo-delta-bilirubin and 15-oxo-beta-bilirubin) in the presence of a suitable electron donor such as ascorbate or NADPH--cytochrome P450 reductase, with subsequent release of free iron. In Staphylococcus aureus (strain MRSA252), this protein is Heme oxygenase (staphylobilin-producing) 2 (isdI).